Consider the following 161-residue polypeptide: Alpha-crystallin A chain (161 aa).

Met1 is subject to N-acetylmethionine. The segment at 1-53 is required for complex formation with BFSP1 and BFSP2; sequence MDVTIQHPWFKRALGPFYHNRLFDQFFGEGLFEYDLLPFQSLFRTVLDSGISE. A deamidated glutamine; partial mark is found at Gln6 and Gln40. The 110-residue stretch at 41-150 folds into the sHSP domain; that stretch reads SLFRTVLDSG…SHSERAIPVS (110 aa). Lys87 carries the N6-acetyllysine modification. His88 contacts Zn(2+). Asn89 is subject to Deamidated asparagine; partial. Zn(2+)-binding residues include Glu90 and His95. At Ser110 the chain carries Phosphoserine. Deamidated asparagine; partial is present on Asn111. A disulfide bridge connects residues Cys119 and Cys130. At Gln135 the chain carries Deamidated glutamine; partial. A disordered region spans residues 135–161; the sequence is QSGMDASHSERAIPVSREEKASSAPNS. Over residues 141 to 155 the composition is skewed to basic and acidic residues; it reads SHSERAIPVSREEKA. His142 is a Zn(2+) binding site. O-linked (GlcNAc) serine glycosylation is present at Ser150.

It belongs to the small heat shock protein (HSP20) family. As to quaternary structure, heteromer composed of three CRYAA and one CRYAB subunits. Inter-subunit bridging via zinc ions enhances stability, which is crucial as there is no protein turn over in the lens. Can also form homodimers and homotetramers (dimers of dimers) which serve as the building blocks of homooligomers. Within homooligomers, the zinc-binding motif is created from residues of 3 different molecules. His-88 and Glu-90 from one molecule are ligands of the zinc ion, and His-95 and His-142 residues from additional molecules complete the site with tetrahedral coordination geometry. Part of a complex required for lens intermediate filament formation composed of BFSP1, BFSP2 and CRYAA. Undergoes age-dependent proteolytical cleavage at the C-terminus.

It localises to the cytoplasm. The protein localises to the nucleus. Functionally, contributes to the transparency and refractive index of the lens. In its oxidized form (absence of intramolecular disulfide bond), acts as a chaperone, preventing aggregation of various proteins under a wide range of stress conditions. Required for the correct formation of lens intermediate filaments as part of a complex composed of BFSP1, BFSP2 and CRYAA. The chain is Alpha-crystallin A chain (CRYAA) from Trichechus inunguis (Amazon manatee).